Consider the following 432-residue polypeptide: Cyclic GMP-AMP synthase (432 aa).

110–115 contributes to the GTP binding site; the sequence is QGSFQY. Residues aspartate 129 and aspartate 131 each coordinate Mg(2+). Arginine 180 is a binding site for ATP. Aspartate 191 lines the Mg(2+) pocket. ATP is bound at residue serine 255. GTP contacts are provided by lysine 283, serine 297, and aspartate 344. Positions 413–432 are disordered; that stretch reads LNAPSKEPSSKPINKTMVSG. Polar residues predominate over residues 423–432; the sequence is KPINKTMVSG.

Belongs to the CD-NTase family. A01 subfamily. Mg(2+) serves as cofactor.

The enzyme catalyses GTP + ATP = 3',3'-cGAMP + 2 diphosphate. Functionally, cyclic nucleotide synthase (second messenger synthase) of a CBASS antivirus system. CBASS (cyclic oligonucleotide-based antiphage signaling system) provides immunity against bacteriophage. The CD-NTase protein synthesizes cyclic nucleotides in response to infection; these serve as specific second messenger signals. The signals activate a diverse range of effectors, leading to bacterial cell death and thus abortive phage infection. A type II-C(GA) CBASS system. Its function is as follows. Catalyzes the synthesis of 3'3'-cyclic GMP-AMP (3'3'-cGAMP) from GTP and ATP, a second messenger in cell signal transduction. Is also able to produce c-di-AMP and c-di-GMP from ATP and GTP, respectively; however, 3'3'-cGAMP is the dominant molecule produced by DncV in vivo, contrary to the 2'3'-cGAMP produced by eukaryotes. By producing cGAMP, down-regulates csgD expression and expression of flagellum regulon genes, which leads to the down-regulation of rdar biofilm formation and flagellum-mediated swimming and swarming motility in a temperature-dependent manner. Controls the activity of cGAMP-activated phospholipase CapV, a patatin-like lipase that is a direct 3',3'-cGAMP receptor encoded in the dncV operon. This Escherichia coli protein is Cyclic GMP-AMP synthase.